The chain runs to 117 residues: Protein Aeq5-like2 (117 aa).

Over 1 to 36 (MLVNARAIRQSIGIVVAQCRRDLESNRTLDYRTRMR) the chain is Cytoplasmic. The helical transmembrane segment at 37–56 (TSLILVAMVMVSVLLPYTYG) threads the bilayer. Residues 57–117 (SSCDSFCTEQ…RFTKEPTEES (61 aa)) are Extracellular-facing. 4 disulfide bridges follow: Cys59–Cys94, Cys63–Cys90, Cys70–Cys83, and Cys74–Cys80.

In terms of processing, the mature peptide may be cleaved at a dibasic residue site and be shorter than the sequence shown (possibly residues 1-94). As to expression, expressed in endodermal ganglion neurons, apparently bipolar and following mesentery folds (observed in both planulae and primary polyps). It not expressed in nematocytes.

It localises to the membrane. This is Protein Aeq5-like2 from Nematostella vectensis (Starlet sea anemone).